Consider the following 330-residue polypeptide: Ketol-acid reductoisomerase (NADP(+)) (330 aa).

Residues 2–182 (ARMYYDEDAN…GGTRAGVLET (181 aa)) enclose the KARI N-terminal Rossmann domain. Residues 25–28 (YGSQ), serine 51, serine 53, and 83–86 (DEVQ) each bind NADP(+). Histidine 108 is an active-site residue. Position 134 (glycine 134) interacts with NADP(+). The KARI C-terminal knotted domain occupies 183–328 (TFREETETDL…QDLRAMMSWL (146 aa)). Aspartate 191, glutamate 195, glutamate 227, and glutamate 231 together coordinate Mg(2+). Serine 252 contributes to the substrate binding site.

Belongs to the ketol-acid reductoisomerase family. The cofactor is Mg(2+).

The catalysed reaction is (2R)-2,3-dihydroxy-3-methylbutanoate + NADP(+) = (2S)-2-acetolactate + NADPH + H(+). It carries out the reaction (2R,3R)-2,3-dihydroxy-3-methylpentanoate + NADP(+) = (S)-2-ethyl-2-hydroxy-3-oxobutanoate + NADPH + H(+). It functions in the pathway amino-acid biosynthesis; L-isoleucine biosynthesis; L-isoleucine from 2-oxobutanoate: step 2/4. It participates in amino-acid biosynthesis; L-valine biosynthesis; L-valine from pyruvate: step 2/4. Its function is as follows. Involved in the biosynthesis of branched-chain amino acids (BCAA). Catalyzes an alkyl-migration followed by a ketol-acid reduction of (S)-2-acetolactate (S2AL) to yield (R)-2,3-dihydroxy-isovalerate. In the isomerase reaction, S2AL is rearranged via a Mg-dependent methyl migration to produce 3-hydroxy-3-methyl-2-ketobutyrate (HMKB). In the reductase reaction, this 2-ketoacid undergoes a metal-dependent reduction by NADPH to yield (R)-2,3-dihydroxy-isovalerate. This chain is Ketol-acid reductoisomerase (NADP(+)), found in Microcystis aeruginosa (strain NIES-843 / IAM M-2473).